The following is a 222-amino-acid chain: Charged multivesicular body protein 4b (222 aa).

2 disordered regions span residues 1 to 21 (MSLI…PSPQ) and 183 to 222 (GPET…WATA). Residues 21 to 182 (QEAIQKLRDT…ELDKNLLEVQ (162 aa)) adopt a coiled-coil conformation. Residues 188-200 (PLPNVPAAVLPAK) are compositionally biased toward low complexity.

The protein belongs to the SNF7 family. Probable core component of the endosomal sorting required for transport complex III (ESCRT-III). ESCRT-III components are thought to multimerize to form a flat lattice on the perimeter membrane of the endosome.

Its subcellular location is the cytoplasm. It localises to the cytosol. The protein localises to the late endosome membrane. It is found in the midbody. Its function is as follows. Probable core component of the endosomal sorting required for transport complex III (ESCRT-III) which is involved in multivesicular bodies (MVBs) formation and sorting of endosomal cargo proteins into MVBs. MVBs contain intraluminal vesicles (ILVs) that are generated by invagination and scission from the limiting membrane of the endosome and mostly are delivered to lysosomes enabling degradation of membrane proteins, such as stimulated growth factor receptors, lysosomal enzymes and lipids. This chain is Charged multivesicular body protein 4b (chmp4b), found in Xenopus tropicalis (Western clawed frog).